The primary structure comprises 445 residues: Exodeoxyribonuclease 7 large subunit (445 aa).

This sequence belongs to the XseA family. Heterooligomer composed of large and small subunits.

Its subcellular location is the cytoplasm. The catalysed reaction is Exonucleolytic cleavage in either 5'- to 3'- or 3'- to 5'-direction to yield nucleoside 5'-phosphates.. Functionally, bidirectionally degrades single-stranded DNA into large acid-insoluble oligonucleotides, which are then degraded further into small acid-soluble oligonucleotides. The protein is Exodeoxyribonuclease 7 large subunit of Shewanella halifaxensis (strain HAW-EB4).